The primary structure comprises 300 residues: tRNA-cytidine(32) 2-sulfurtransferase (300 aa).

A PP-loop motif motif is present at residues 57-62; it reads SGGKDS. Residues cysteine 132, cysteine 135, and cysteine 223 each coordinate [4Fe-4S] cluster.

This sequence belongs to the TtcA family. Homodimer. It depends on Mg(2+) as a cofactor. [4Fe-4S] cluster serves as cofactor.

The protein localises to the cytoplasm. The enzyme catalyses cytidine(32) in tRNA + S-sulfanyl-L-cysteinyl-[cysteine desulfurase] + AH2 + ATP = 2-thiocytidine(32) in tRNA + L-cysteinyl-[cysteine desulfurase] + A + AMP + diphosphate + H(+). It participates in tRNA modification. Functionally, catalyzes the ATP-dependent 2-thiolation of cytidine in position 32 of tRNA, to form 2-thiocytidine (s(2)C32). The sulfur atoms are provided by the cysteine/cysteine desulfurase (IscS) system. The polypeptide is tRNA-cytidine(32) 2-sulfurtransferase (Xanthomonas campestris pv. campestris (strain B100)).